A 113-amino-acid chain; its full sequence is MMKRLVVLRRREPAVRFSCCGVRYGECRRNHAASTGGHAVDGCREFIAAEDGGGGNSTSAVGVAAAALKCAACGCHRSFHRRVQVYEVAWDDDCASGDTSSSSPSSSSSLSSE.

A ZF-HD dimerization-type; degenerate zinc finger spans residues tyrosine 24–valine 83. The disordered stretch occupies residues aspartate 93 to glutamate 113. Low complexity predominate over residues serine 100 to glutamate 113.

Homo- and heterodimers.

Its subcellular location is the cytoplasm. Its function is as follows. Inhibits zinc finger homeodomain (ZHD) transcription factors, by interacting with them to prevent both their nuclear localization and their DNA-binding properties. The chain is Mini zinc finger protein 2 (MIF3) from Oryza sativa subsp. japonica (Rice).